A 461-amino-acid chain; its full sequence is tRNA-splicing endonuclease subunit Sen2 (461 aa).

2 disordered regions span residues 140–176 (GAEQTGDSCDTVCPNTENTELSGQSSTDTGNIATSSP) and 190–210 (GDPASDSMVGSKEQEPADVKE). A compositionally biased stretch (polar residues) spans 144–176 (TGDSCDTVCPNTENTELSGQSSTDTGNIATSSP). Residues 201 to 210 (KEQEPADVKE) show a composition bias toward basic and acidic residues. Catalysis depends on residues Y365, H373, and K412.

This sequence belongs to the tRNA-intron endonuclease family. As to quaternary structure, tRNA splicing endonuclease is a heterotetramer composed of SEN2, SEN15, SEN34/LENG5 and SEN54.

The protein resides in the nucleus. It catalyses the reaction pretRNA = a 3'-half-tRNA molecule with a 5'-OH end + a 5'-half-tRNA molecule with a 2',3'-cyclic phosphate end + an intron with a 2',3'-cyclic phosphate and a 5'-hydroxyl terminus.. Constitutes one of the two catalytic subunit of the tRNA-splicing endonuclease complex, a complex responsible for identification and cleavage of the splice sites in pre-tRNA. It cleaves pre-tRNA at the 5'- and 3'-splice sites to release the intron. The products are an intron and two tRNA half-molecules bearing 2',3'-cyclic phosphate and 5'-OH termini. There are no conserved sequences at the splice sites, but the intron is invariably located at the same site in the gene, placing the splice sites an invariant distance from the constant structural features of the tRNA body. Probably carries the active site for 5'-splice site cleavage. The tRNA splicing endonuclease is also involved in mRNA processing via its association with pre-mRNA 3'-end processing factors, establishing a link between pre-tRNA splicing and pre-mRNA 3'-end formation, suggesting that the endonuclease subunits function in multiple RNA-processing events. This chain is tRNA-splicing endonuclease subunit Sen2 (TSEN2), found in Gallus gallus (Chicken).